A 258-amino-acid chain; its full sequence is Clathrin light chain 3 (258 aa).

A compositionally biased stretch (polar residues) spans 1–18 (MSSTLSNEESGLGDSNRS). A disordered region spans residues 1 to 96 (MSSTLSNEES…PPPSAMEKEE (96 aa)). Ser2 is subject to N-acetylserine. The segment covering 34 to 50 (SRFQSQRFDSSFSNFDS) has biased composition (low complexity). The span at 66-79 (RPETQSPPSINSFD) shows a compositional bias: polar residues. Residues 90 to 152 (SAMEKEEGFA…TIENNKKLNR (63 aa)) form an involved in binding clathrin heavy chain region. The stretch at 105-164 (RLNALRLEEKEKEEKEMVQQILEAAEQYKAEFYSKRNVTIENNKKLNREKEKFFLENQEK) forms a coiled coil. Residues 224-234 (LKHNPPTHMKP) show a composition bias toward basic residues. Positions 224–258 (LKHNPPTHMKPKLPSPSGADPNVSVSEQVTVTEKL) are disordered. Positions 246-258 (VSVSEQVTVTEKL) are enriched in polar residues.

The protein belongs to the clathrin light chain family. Clathrin coats are formed from molecules containing 3 heavy chains and 3 light chains.

It localises to the cytoplasmic vesicle membrane. It is found in the membrane. The protein localises to the coated pit. Clathrin is the major protein of the polyhedral coat of coated pits and vesicles. This chain is Clathrin light chain 3, found in Arabidopsis thaliana (Mouse-ear cress).